Here is a 414-residue protein sequence, read N- to C-terminus: Serine hydroxymethyltransferase (414 aa).

(6S)-5,6,7,8-tetrahydrofolate contacts are provided by residues L121 and 125 to 127; that span reads GHL. K229 is subject to N6-(pyridoxal phosphate)lysine.

Belongs to the SHMT family. As to quaternary structure, homodimer. It depends on pyridoxal 5'-phosphate as a cofactor.

It is found in the cytoplasm. It carries out the reaction (6R)-5,10-methylene-5,6,7,8-tetrahydrofolate + glycine + H2O = (6S)-5,6,7,8-tetrahydrofolate + L-serine. It functions in the pathway one-carbon metabolism; tetrahydrofolate interconversion. The protein operates within amino-acid biosynthesis; glycine biosynthesis; glycine from L-serine: step 1/1. Its function is as follows. Catalyzes the reversible interconversion of serine and glycine with tetrahydrofolate (THF) serving as the one-carbon carrier. This reaction serves as the major source of one-carbon groups required for the biosynthesis of purines, thymidylate, methionine, and other important biomolecules. Also exhibits THF-independent aldolase activity toward beta-hydroxyamino acids, producing glycine and aldehydes, via a retro-aldol mechanism. The sequence is that of Serine hydroxymethyltransferase from Paracidovorax citrulli (strain AAC00-1) (Acidovorax citrulli).